Consider the following 49-residue polypeptide: Unknown protein from spot 75 of 2D-PAGE of etiolated coleoptile (49 aa).

The sequence is that of Unknown protein from spot 75 of 2D-PAGE of etiolated coleoptile from Zea mays (Maize).